Reading from the N-terminus, the 1212-residue chain is Filamin-A-interacting protein 1 (1212 aa).

Over residues 1–15 (MRSRNQGGESSSNGH) the composition is skewed to polar residues. Residues 1–73 (MRSRNQGGES…SEKKTKKSVE (73 aa)) are disordered. Basic and acidic residues-rich tracts occupy residues 32 to 47 (PSEDAKKNKANRKEED) and 60 to 73 (PSGESEKKTKKSVE). Ser-137 carries the phosphoserine modification. Coiled coils occupy residues 191 to 575 (DYMN…DELM) and 623 to 777 (PEDN…ELEL). Disordered stretches follow at residues 871–898 (WMRKRENGPSTPQEKGPRPNQGAGHPGE) and 948–975 (KPRITIIPSPNVMSQKPKSADPTLGPER). The residue at position 978 (Ser-978) is a Phosphoserine. Positions 1102–1190 (VSTGTVLRSP…TKFQPRAETQ (89 aa)) are disordered. Residues 1124 to 1138 (VTSTITITPVTTSST) show a composition bias toward low complexity. Residues 1139–1155 (RGTQSVSGQDGSSQRPT) show a composition bias toward polar residues.

This sequence belongs to the FILIP1 family. In terms of assembly, interacts with FLNA. Interacts with RHOD (in GTP-bound form). In terms of tissue distribution, expressed in muscle tissue, including heart. Found in cortical ventricular zone.

It is found in the cytoplasm. The protein localises to the cytoskeleton. The protein resides in the stress fiber. Functionally, by acting through a filamin-A/F-actin axis, it controls the start of neocortical cell migration from the ventricular zone. May be able to induce the degradation of Filamin A. In Rattus norvegicus (Rat), this protein is Filamin-A-interacting protein 1 (Filip1).